Reading from the N-terminus, the 269-residue chain is Small ribosomal subunit protein uS2 (269 aa).

Residues 228–269 form a disordered region; sequence QLDSDDDYEEFDESLAEGDYDDYDEEEDEDSETVSSQEGEEE. A compositionally biased stretch (acidic residues) spans 230–269; that stretch reads DSDDDYEEFDESLAEGDYDDYDEEEDEDSETVSSQEGEEE.

The protein belongs to the universal ribosomal protein uS2 family.

The polypeptide is Small ribosomal subunit protein uS2 (Crocosphaera subtropica (strain ATCC 51142 / BH68) (Cyanothece sp. (strain ATCC 51142))).